A 192-amino-acid polypeptide reads, in one-letter code: Shikimate kinase (192 aa).

Residue 26 to 31 (ASGKSS) coordinates ATP. S30 serves as a coordination point for Mg(2+). Substrate is bound by residues D48, R72, and G94. Residue R132 coordinates ATP. R151 provides a ligand contact to substrate.

Belongs to the shikimate kinase family. Monomer. Mg(2+) is required as a cofactor.

The protein resides in the cytoplasm. The catalysed reaction is shikimate + ATP = 3-phosphoshikimate + ADP + H(+). It participates in metabolic intermediate biosynthesis; chorismate biosynthesis; chorismate from D-erythrose 4-phosphate and phosphoenolpyruvate: step 5/7. Its function is as follows. Catalyzes the specific phosphorylation of the 3-hydroxyl group of shikimic acid using ATP as a cosubstrate. The polypeptide is Shikimate kinase (Prochlorococcus marinus (strain MIT 9313)).